A 216-amino-acid chain; its full sequence is GTP-binding nuclear protein Ran, testis-specific isoform (216 aa).

Alanine 2 carries the N-acetylalanine modification. The region spanning 7–171 (PQIQFKLVLV…FWLARKLIGD (165 aa)) is the Small GTPase Ran-type domain. 17–24 (GDGGTGKT) provides a ligand contact to GTP. Threonine 24 carries the post-translational modification Phosphothreonine. A switch-I region spans residues 37–45 (KEYVATLGV). Lysine 60 carries the N6-acetyllysine modification. 65–69 (DTAGQ) provides a ligand contact to GTP. The switch-II stretch occupies residues 68–84 (GQEKFGGLRDGYYIQAQ). N6-acetyllysine; alternate is present on lysine 71. Residue lysine 71 forms a Glycyl lysine isopeptide (Lys-Gly) (interchain with G-Cter in SUMO2); alternate linkage. A Glycyl lysine isopeptide (Lys-Gly) (interchain with G-Cter in ubiquitin); alternate cross-link involves residue lysine 71. Lysine 99 bears the N6-acetyllysine mark. 122-125 (NKVD) provides a ligand contact to GTP. An N6-acetyllysine modification is found at lysine 134. Lysine 152 participates in a covalent cross-link: Glycyl lysine isopeptide (Lys-Gly) (interchain with G-Cter in SUMO2). N6-acetyllysine; alternate is present on lysine 159. Lysine 159 carries the N6-succinyllysine; alternate modification.

The protein belongs to the small GTPase superfamily. Ran family. As to expression, testis specific.

Its subcellular location is the nucleus. The catalysed reaction is GTP + H2O = GDP + phosphate + H(+). Its function is as follows. GTP-binding protein involved in nucleocytoplasmic transport. Required for the import of protein into the nucleus and also for RNA export. Involved in chromatin condensation and control of cell cycle. The polypeptide is GTP-binding nuclear protein Ran, testis-specific isoform (Rasl2-9) (Rattus norvegicus (Rat)).